We begin with the raw amino-acid sequence, 88 residues long: MRLFLSLPVLVVVLAMVWEGPAPTQAAPEISSTLGRIPDKLKEFGNTLEDKARAAIDSIKQSDIPAKTRNWFSETFNKVKEQLKTAFS.

The first 26 residues, 1 to 26 (MRLFLSLPVLVVVLAMVWEGPAPTQA), serve as a signal peptide directing secretion.

Belongs to the apolipoprotein C1 family.

It localises to the secreted. Functionally, inhibitor of lipoprotein binding to the low density lipoprotein (LDL) receptor, LDL receptor-related protein, and very low density lipoprotein (VLDL) receptor. Associates with high density lipoproteins (HDL) and the triacylglycerol-rich lipoproteins in the plasma and makes up about 10% of the protein of the VLDL and 2% of that of HDL. Appears to interfere directly with fatty acid uptake and is also the major plasma inhibitor of cholesteryl ester transfer protein (CETP). Binds free fatty acids and reduces their intracellular esterification. Modulates the interaction of APOE with beta-migrating VLDL and inhibits binding of beta-VLDL to the LDL receptor-related protein. The protein is Apolipoprotein C-I (APOC1) of Neomonachus schauinslandi (Hawaiian monk seal).